Here is a 95-residue protein sequence, read N- to C-terminus: Phosphoribosyl-ATP pyrophosphatase (95 aa).

Belongs to the PRA-PH family.

The protein resides in the cytoplasm. The enzyme catalyses 1-(5-phospho-beta-D-ribosyl)-ATP + H2O = 1-(5-phospho-beta-D-ribosyl)-5'-AMP + diphosphate + H(+). It functions in the pathway amino-acid biosynthesis; L-histidine biosynthesis; L-histidine from 5-phospho-alpha-D-ribose 1-diphosphate: step 2/9. The sequence is that of Phosphoribosyl-ATP pyrophosphatase from Methanocella arvoryzae (strain DSM 22066 / NBRC 105507 / MRE50).